Here is a 431-residue protein sequence, read N- to C-terminus: Glucose-1-phosphate adenylyltransferase (431 aa).

Lys-39 contacts beta-D-fructose 1,6-bisphosphate. Residues Arg-40, His-46, and Arg-52 each contribute to the AMP site. Tyr-114 contributes to the alpha-D-glucose 1-phosphate binding site. Arg-130 serves as a coordination point for AMP. Residues Gly-179, 194–195, and Ser-212 contribute to the alpha-D-glucose 1-phosphate site; that span reads EK. The AMP site is built by Glu-370 and Arg-386. Residues 419 to 423 and 429 to 431 contribute to the beta-D-fructose 1,6-bisphosphate site; these read REMLR and QER.

Belongs to the bacterial/plant glucose-1-phosphate adenylyltransferase family. Homotetramer.

The catalysed reaction is alpha-D-glucose 1-phosphate + ATP + H(+) = ADP-alpha-D-glucose + diphosphate. The protein operates within glycan biosynthesis; glycogen biosynthesis. Its activity is regulated as follows. Allosterically activated by fructose-1,6-bisphosphate (F16BP) and inhibited by AMP. Functionally, involved in the biosynthesis of ADP-glucose, a building block required for the elongation reactions to produce glycogen. Catalyzes the reaction between ATP and alpha-D-glucose 1-phosphate (G1P) to produce pyrophosphate and ADP-Glc. The polypeptide is Glucose-1-phosphate adenylyltransferase (Shigella dysenteriae serotype 1 (strain Sd197)).